The following is a 424-amino-acid chain: Phosphoprotein associated with glycosphingolipid-enriched microdomains 1 (424 aa).

At 1–17 (MGPAGSALSSGQMQMQM) the chain is on the extracellular side. The chain crosses the membrane as a helical; Signal-anchor for type III membrane protein span at residues 18–38 (VLWGSLAAVAMFFLITFLILL). 2 S-palmitoyl cysteine lipidation sites follow: Cys-39 and Cys-42. At 39-424 (CSSCDRDKKP…LQQGRDVTRL (386 aa)) the chain is on the cytoplasmic side. Phosphoserine occurs at positions 52 and 63. Tyr-107 is subject to Phosphotyrosine; by LYN. Residue Ser-157 is modified to Phosphoserine. Phosphotyrosine occurs at positions 165, 183, and 224. Residues 194 to 347 (DKSQGGKSKS…GPPQRSSSSC (154 aa)) form a disordered region. Residues 215-230 (AEGKADFAEYASVDRN) are compositionally biased toward basic and acidic residues. Ser-226 carries the phosphoserine modification. Positions 236-247 (STNAESILGTSS) are enriched in polar residues. Tyr-314 is modified (phosphotyrosine; by FYN and LYN). The interaction with CSK stretch occupies residues 314 to 317 (YSSV). Polar residues predominate over residues 331 to 347 (STCQCPQGPPQRSSSSC). Ser-346 bears the Phosphoserine mark. Tyr-351, Tyr-381, and Tyr-409 each carry phosphotyrosine. Residues 361–424 (PNSISMLPPA…LQQGRDVTRL (64 aa)) form a disordered region. Residues 422-424 (TRL) are interaction with NHERF1.

Interacts with NHERF1/EBP50. In resting T-cells, part of a PAG1-NHERF1-MSN complex which is disrupted upon TCR activation. When phosphorylated, interacts with CSK. Identified in a complex with LYN and STAT3. Interacts with LYN. In terms of processing, palmitoylated. Phosphorylated by FYN on Tyr-314 in resting T-cells; which promotes interaction with CSK. Dephosphorylated by PTPRC/CD45 upon TCR activation; which leads to CSK dissociation. May also be dephosphorylated by PTPN11. Hyperphosphorylated in mast cells upon FCER1 activation. Phosphorylated by LYN in response to EPO. As to expression, ubiquitously expressed, with highest levels in developing brain, lung, thymus, spleen and testis. Present in mast cells.

Its subcellular location is the cell membrane. Negatively regulates TCR (T-cell antigen receptor)-mediated signaling in T-cells and FCER1 (high affinity immunoglobulin epsilon receptor)-mediated signaling in mast cells. Promotes CSK activation and recruitment to lipid rafts, which results in LCK inhibition. Inhibits immunological synapse formation by preventing dynamic arrangement of lipid raft proteins. May be involved in cell adhesion signaling. This chain is Phosphoprotein associated with glycosphingolipid-enriched microdomains 1 (Pag1), found in Rattus norvegicus (Rat).